Consider the following 153-residue polypeptide: NADPH-dependent 7-cyano-7-deazaguanine reductase (153 aa).

The tract at residues 1 to 30 is disordered; that stretch reads MDSIETHAKQLGQQTPLPASPEAAQLDRVP. The active-site Thioimide intermediate is Cys51. The active-site Proton donor is Asp58. Substrate contacts are provided by residues 73–75 and 92–93; these read VES and HE.

The protein belongs to the GTP cyclohydrolase I family. QueF type 1 subfamily.

The protein resides in the cytoplasm. It catalyses the reaction 7-aminomethyl-7-carbaguanine + 2 NADP(+) = 7-cyano-7-deazaguanine + 2 NADPH + 3 H(+). It participates in tRNA modification; tRNA-queuosine biosynthesis. In terms of biological role, catalyzes the NADPH-dependent reduction of 7-cyano-7-deazaguanine (preQ0) to 7-aminomethyl-7-deazaguanine (preQ1). The sequence is that of NADPH-dependent 7-cyano-7-deazaguanine reductase from Methylorubrum extorquens (strain CM4 / NCIMB 13688) (Methylobacterium extorquens).